The following is a 391-amino-acid chain: Succinate--CoA ligase [ADP-forming] subunit beta (391 aa).

Residues 9 to 245 (KQIFAKYGVP…ISEEDADERE (237 aa)) form the ATP-grasp domain. ATP contacts are provided by residues K46, 53–55 (GRG), E99, A102, and E107. Mg(2+) contacts are provided by N200 and D214. Substrate-binding positions include N265 and 322–324 (GIV).

Belongs to the succinate/malate CoA ligase beta subunit family. As to quaternary structure, heterotetramer of two alpha and two beta subunits. The cofactor is Mg(2+).

The enzyme catalyses succinate + ATP + CoA = succinyl-CoA + ADP + phosphate. It carries out the reaction GTP + succinate + CoA = succinyl-CoA + GDP + phosphate. The protein operates within carbohydrate metabolism; tricarboxylic acid cycle; succinate from succinyl-CoA (ligase route): step 1/1. In terms of biological role, succinyl-CoA synthetase functions in the citric acid cycle (TCA), coupling the hydrolysis of succinyl-CoA to the synthesis of either ATP or GTP and thus represents the only step of substrate-level phosphorylation in the TCA. The beta subunit provides nucleotide specificity of the enzyme and binds the substrate succinate, while the binding sites for coenzyme A and phosphate are found in the alpha subunit. This is Succinate--CoA ligase [ADP-forming] subunit beta from Sulfurimonas denitrificans (strain ATCC 33889 / DSM 1251) (Thiomicrospira denitrificans (strain ATCC 33889 / DSM 1251)).